Here is a 307-residue protein sequence, read N- to C-terminus: Ornithine carbamoyltransferase (307 aa).

Residues 55 to 58 (STRT), glutamine 82, arginine 106, and 133 to 136 (HPCQ) contribute to the carbamoyl phosphate site. Residues asparagine 164, aspartate 224, and 228–229 (SM) each bind L-ornithine. Carbamoyl phosphate-binding positions include 263 to 264 (CL) and arginine 291.

The protein belongs to the aspartate/ornithine carbamoyltransferase superfamily. OTCase family.

Its subcellular location is the cytoplasm. It catalyses the reaction carbamoyl phosphate + L-ornithine = L-citrulline + phosphate + H(+). Its pathway is amino-acid biosynthesis; L-arginine biosynthesis; L-arginine from L-ornithine and carbamoyl phosphate: step 1/3. Its function is as follows. Reversibly catalyzes the transfer of the carbamoyl group from carbamoyl phosphate (CP) to the N(epsilon) atom of ornithine (ORN) to produce L-citrulline. This Bradyrhizobium diazoefficiens (strain JCM 10833 / BCRC 13528 / IAM 13628 / NBRC 14792 / USDA 110) protein is Ornithine carbamoyltransferase.